We begin with the raw amino-acid sequence, 93 residues long: Cell division topological specificity factor (93 aa).

Belongs to the MinE family.

Functionally, prevents the cell division inhibition by proteins MinC and MinD at internal division sites while permitting inhibition at polar sites. This ensures cell division at the proper site by restricting the formation of a division septum at the midpoint of the long axis of the cell. This Synechococcus sp. (strain WH7803) protein is Cell division topological specificity factor.